The chain runs to 396 residues: ATP phosphoribosyltransferase regulatory subunit (396 aa).

It belongs to the class-II aminoacyl-tRNA synthetase family. HisZ subfamily. In terms of assembly, heteromultimer composed of HisG and HisZ subunits.

Its subcellular location is the cytoplasm. The protein operates within amino-acid biosynthesis; L-histidine biosynthesis; L-histidine from 5-phospho-alpha-D-ribose 1-diphosphate: step 1/9. Functionally, required for the first step of histidine biosynthesis. May allow the feedback regulation of ATP phosphoribosyltransferase activity by histidine. This Cellvibrio japonicus (strain Ueda107) (Pseudomonas fluorescens subsp. cellulosa) protein is ATP phosphoribosyltransferase regulatory subunit.